A 725-amino-acid polypeptide reads, in one-letter code: Antigen peptide transporter 1 (725 aa).

Topologically, residues 1–8 are cytoplasmic; the sequence is MAAHAWPT. A helical transmembrane segment spans residues 9 to 29; that stretch reads AALLLLLVDWLLLRPVLPGIF. Topologically, residues 30–38 are lumenal; that stretch reads SLLVPEVPL. The chain crosses the membrane as a helical span at residues 39 to 60; the sequence is LRVWAVGLSRWAILGLGVRGVL. Over 61 to 67 the chain is Cytoplasmic; the sequence is GVTAGAR. A helical membrane pass occupies residues 68–88; that stretch reads GWLAALQPLVAALGLALPGLA. Residues 89–110 lie on the Lumenal side of the membrane; that stretch reads SFRKLSAWGALREGDNAGLLHW. Residues 111 to 131 traverse the membrane as a helical segment; the sequence is NSRLDAFVLSYVAALPAAALW. Residues 132–163 lie on the Cytoplasmic side of the membrane; sequence HKLGGFWAPSGHKGAGDMLCRMLGFLDSKKGR. Residues 164–184 traverse the membrane as a helical segment; the sequence is LHLVLVLLILSCLGEMAIPFF. Residues 164 to 447 form the ABC transmembrane type-1 domain; that stretch reads LHLVLVLLIL…LLSIYPSMQK (284 aa). At 185–204 the chain is on the lumenal side; that stretch reads TGRITDWILQDKTAPSFARN. The chain crosses the membrane as a helical span at residues 205–225; sequence MWLMCILTIASTVLEFAGDGI. Residues 226–275 are Cytoplasmic-facing; it reads YNITMGHMHSRVHGEVFRAVLHQETGFFLKNPTGSITSRVTEDTSNVCES. The chain crosses the membrane as a helical span at residues 276-296; the sequence is ISDKLNLFLWYLGRGLCLLAF. Over 297–305 the chain is Lumenal; that stretch reads MIWGSFYLT. Residues 306-326 form a helical membrane-spanning segment; the sequence is VVTLLSLPLLFLLPRRLGKVY. Residues 327–395 lie on the Cytoplasmic side of the membrane; sequence QSLAVKVQES…VTEVWTMSVS (69 aa). Residues 352-397 form a part of the peptide-binding site region; it reads PTVRSFANEEGEAQKFRQKLEEMKPLNKKEALAYVTEVWTMSVSGM. The chain crosses the membrane as a helical span at residues 396–416; sequence GMLLKVGILYLGGQLVVRGAV. At 417–420 the chain is on the lumenal side; that stretch reads SSGN. Residues 421–441 traverse the membrane as a helical segment; the sequence is LVSFVLYQLQFTRAVEVLLSI. Residues 430 to 464 are part of the peptide-binding site; it reads QFTRAVEVLLSIYPSMQKSVGASEKIFEYLDRTPC. The Cytoplasmic segment spans residues 442–725; that stretch reads YPSMQKSVGA…MVEALAAPSD (284 aa). In terms of domain architecture, ABC transporter spans 480–719; sequence VKFQDVSFAY…GGCYRSMVEA (240 aa). Residues 515–523, 618–624, and Q678 each bind ATP; these read GPNGSGKST and NQLSGGQ. S522 provides a ligand contact to Mg(2+).

Belongs to the ABC transporter superfamily. ABCB family. MHC peptide exporter (TC 3.A.1.209) subfamily. As to quaternary structure, heterodimer of TAP1 and TAP2 (TAP1-TAP2). A component of the peptide loading complex (PLC), interacts via TAPBP with MHCI heterodimer; this interaction mediates peptide-MHCI assembly. Interacts with PSMB5 and PSMB8. Mg(2+) serves as cofactor.

The protein localises to the endoplasmic reticulum membrane. It carries out the reaction a peptide antigen(in) + ATP + H2O = a peptide antigen(out) + ADP + phosphate + H(+). In terms of biological role, ABC transporter associated with antigen processing. In complex with TAP2 mediates unidirectional translocation of peptide antigens from cytosol to endoplasmic reticulum (ER) for loading onto MHC class I (MHCI) molecules. Uses the chemical energy of ATP to export peptides against the concentration gradient. During the transport cycle alternates between 'inward-facing' state with peptide binding site facing the cytosol to 'outward-facing' state with peptide binding site facing the ER lumen. Peptide antigen binding to ATP-loaded TAP1-TAP2 induces a switch to hydrolysis-competent 'outward-facing' conformation ready for peptide loading onto nascent MHCI molecules. Subsequently ATP hydrolysis resets the transporter to the 'inward facing' state for a new cycle. As a component of the peptide loading complex (PLC), acts as a molecular scaffold essential for peptide-MHCI assembly and antigen presentation. In Rattus norvegicus (Rat), this protein is Antigen peptide transporter 1 (Tap1).